The chain runs to 532 residues: CTP synthase (532 aa).

Residues 1-265 (MKYIVVTGGV…DEYLMRKLNL (265 aa)) are amidoligase domain. Residue serine 12 coordinates CTP. Serine 12 lines the UTP pocket. Residues 13–18 (GLGKGI) and aspartate 70 contribute to the ATP site. Positions 70 and 140 each coordinate Mg(2+). CTP is bound by residues 147–149 (DIE), 186–191 (KTKPTQ), and lysine 222. Residues 186 to 191 (KTKPTQ) and lysine 222 contribute to the UTP site. A Glutamine amidotransferase type-1 domain is found at 289–529 (SIAIVGKYVD…VRAALKYRRE (241 aa)). An L-glutamine-binding site is contributed by glycine 349. Cysteine 376 acts as the Nucleophile; for glutamine hydrolysis in catalysis. Residues 377–380 (FGFQ), glutamate 400, and arginine 457 contribute to the L-glutamine site. Catalysis depends on residues histidine 502 and glutamate 504.

The protein belongs to the CTP synthase family. As to quaternary structure, homotetramer.

The enzyme catalyses UTP + L-glutamine + ATP + H2O = CTP + L-glutamate + ADP + phosphate + 2 H(+). It carries out the reaction L-glutamine + H2O = L-glutamate + NH4(+). It catalyses the reaction UTP + NH4(+) + ATP = CTP + ADP + phosphate + 2 H(+). The protein operates within pyrimidine metabolism; CTP biosynthesis via de novo pathway; CTP from UDP: step 2/2. Allosterically activated by GTP, when glutamine is the substrate; GTP has no effect on the reaction when ammonia is the substrate. The allosteric effector GTP functions by stabilizing the protein conformation that binds the tetrahedral intermediate(s) formed during glutamine hydrolysis. Inhibited by the product CTP, via allosteric rather than competitive inhibition. Catalyzes the ATP-dependent amination of UTP to CTP with either L-glutamine or ammonia as the source of nitrogen. Regulates intracellular CTP levels through interactions with the four ribonucleotide triphosphates. The polypeptide is CTP synthase (Archaeoglobus fulgidus (strain ATCC 49558 / DSM 4304 / JCM 9628 / NBRC 100126 / VC-16)).